Here is a 321-residue protein sequence, read N- to C-terminus: Lipoyl synthase (321 aa).

[4Fe-4S] cluster is bound by residues Cys-68, Cys-73, Cys-79, Cys-94, Cys-98, Cys-101, and Ser-308. The 218-residue stretch at 80 to 297 folds into the Radical SAM core domain; it reads FNHGTATFMI…KEIALELGFT (218 aa).

The protein belongs to the radical SAM superfamily. Lipoyl synthase family. It depends on [4Fe-4S] cluster as a cofactor.

The protein resides in the cytoplasm. It carries out the reaction [[Fe-S] cluster scaffold protein carrying a second [4Fe-4S](2+) cluster] + N(6)-octanoyl-L-lysyl-[protein] + 2 oxidized [2Fe-2S]-[ferredoxin] + 2 S-adenosyl-L-methionine + 4 H(+) = [[Fe-S] cluster scaffold protein] + N(6)-[(R)-dihydrolipoyl]-L-lysyl-[protein] + 4 Fe(3+) + 2 hydrogen sulfide + 2 5'-deoxyadenosine + 2 L-methionine + 2 reduced [2Fe-2S]-[ferredoxin]. The protein operates within protein modification; protein lipoylation via endogenous pathway; protein N(6)-(lipoyl)lysine from octanoyl-[acyl-carrier-protein]: step 2/2. Catalyzes the radical-mediated insertion of two sulfur atoms into the C-6 and C-8 positions of the octanoyl moiety bound to the lipoyl domains of lipoate-dependent enzymes, thereby converting the octanoylated domains into lipoylated derivatives. In Vibrio cholerae serotype O1 (strain ATCC 39541 / Classical Ogawa 395 / O395), this protein is Lipoyl synthase.